We begin with the raw amino-acid sequence, 311 residues long: MPPDGKSDMERIGVFKEMGYISIGDKYTSFIYRPFNDSAYKNKQMLLGGTKSKCGLQTGYFDTQFKRIFEREAFTDPVRIDRQYRILQAKKNIGKAFLPSNGEKTTCGMGTYYGTFGGPIQAMSALQIPRKQNKSAGKNFYTNPPKEGSGYGCPDITLSKMVSYSSDPYDRAKEMLKREITAHKSMLKGGAFRLNLHPNEYFDGNPYKFDKPLPPPKKIEEKKHFAVPFKPSSPSKKAGGMKAGAFDSYPTYSAEPYGTKKTKSVVANNEVKIFHPSPGPKSTPIKSIISLNVNKAVNSTNYNRIPSVMSF.

It belongs to the CFAP96 family.

It is found in the cytoplasm. Its subcellular location is the cytoskeleton. It localises to the microtubule organizing center. The protein resides in the centrosome. The sequence is that of Cilia-and flagella-associated protein 96 (cfap96) from Danio rerio (Zebrafish).